The chain runs to 495 residues: 3-octaprenyl-4-hydroxybenzoate carboxy-lyase (495 aa).

Asn172 is a binding site for Mn(2+). Prenylated FMN is bound by residues 175-177 (IYR), 189-191 (RWL), and 194-195 (RG). Glu238 lines the Mn(2+) pocket. Catalysis depends on Asp287, which acts as the Proton donor.

Belongs to the UbiD family. In terms of assembly, homohexamer. Prenylated FMN is required as a cofactor. The cofactor is Mn(2+).

It localises to the cell membrane. It catalyses the reaction a 4-hydroxy-3-(all-trans-polyprenyl)benzoate + H(+) = a 2-(all-trans-polyprenyl)phenol + CO2. It functions in the pathway cofactor biosynthesis; ubiquinone biosynthesis. Catalyzes the decarboxylation of 3-octaprenyl-4-hydroxy benzoate to 2-octaprenylphenol, an intermediate step in ubiquinone biosynthesis. This chain is 3-octaprenyl-4-hydroxybenzoate carboxy-lyase, found in Yersinia pestis bv. Antiqua (strain Angola).